Reading from the N-terminus, the 281-residue chain is E2F-associated phosphoprotein (281 aa).

Methionine 1 is modified (N-acetylmethionine). Positions 1–27 (MNRLQDDYDPYAVEEPSDEEPALSSSE) are disordered. Residues 15–27 (EPSDEEPALSSSE) are compositionally biased toward acidic residues. Serine 17 carries the phosphoserine modification. Residue threonine 37 is modified to Phosphothreonine. 2 positions are modified to phosphoserine: serine 109 and serine 111. Residues 222–245 (PENRRKRRSAKKMRSNPEDPAERE) form a disordered region. Over residues 225 to 235 (RRKRRSAKKMR) the composition is skewed to basic residues. Basic and acidic residues predominate over residues 236–245 (SNPEDPAERE).

Interacts with E2F1. The C-terminal half binds the N-terminal of E2F1. Also interacts with E2F2 and E2F3, but not E2F4.

The protein localises to the cytoplasm. It is found in the nucleus. Its function is as follows. May play an important role in the fine-tuning of both major E2F1 activities, the regulation of the cell-cycle and the induction of apoptosis. Promotes S-phase entry, and inhibits p14(ARP) expression. In Mus musculus (Mouse), this protein is E2F-associated phosphoprotein (Eapp).